Reading from the N-terminus, the 142-residue chain is ATP synthase epsilon chain (142 aa).

Belongs to the ATPase epsilon chain family. In terms of assembly, F-type ATPases have 2 components, CF(1) - the catalytic core - and CF(0) - the membrane proton channel. CF(1) has five subunits: alpha(3), beta(3), gamma(1), delta(1), epsilon(1). CF(0) has three main subunits: a, b and c.

Its subcellular location is the cell inner membrane. Produces ATP from ADP in the presence of a proton gradient across the membrane. In Shewanella baltica (strain OS185), this protein is ATP synthase epsilon chain.